A 103-amino-acid polypeptide reads, in one-letter code: A-type ATP synthase subunit F (103 aa).

The protein belongs to the V-ATPase F subunit family. In terms of assembly, has multiple subunits with at least A(3), B(3), C, D, E, F, H, I and proteolipid K(x).

The protein resides in the cell membrane. In terms of biological role, component of the A-type ATP synthase that produces ATP from ADP in the presence of a proton gradient across the membrane. The chain is A-type ATP synthase subunit F from Pyrococcus furiosus (strain ATCC 43587 / DSM 3638 / JCM 8422 / Vc1).